The primary structure comprises 253 residues: 5'/3'-nucleotidase SurE (253 aa).

The a divalent metal cation site is built by D8, D9, S39, and N92.

The protein belongs to the SurE nucleotidase family. A divalent metal cation is required as a cofactor.

The protein localises to the cytoplasm. It carries out the reaction a ribonucleoside 5'-phosphate + H2O = a ribonucleoside + phosphate. The enzyme catalyses a ribonucleoside 3'-phosphate + H2O = a ribonucleoside + phosphate. It catalyses the reaction [phosphate](n) + H2O = [phosphate](n-1) + phosphate + H(+). Its function is as follows. Nucleotidase with a broad substrate specificity as it can dephosphorylate various ribo- and deoxyribonucleoside 5'-monophosphates and ribonucleoside 3'-monophosphates with highest affinity to 3'-AMP. Also hydrolyzes polyphosphate (exopolyphosphatase activity) with the preference for short-chain-length substrates (P20-25). Might be involved in the regulation of dNTP and NTP pools, and in the turnover of 3'-mononucleotides produced by numerous intracellular RNases (T1, T2, and F) during the degradation of various RNAs. This is 5'/3'-nucleotidase SurE from Erwinia tasmaniensis (strain DSM 17950 / CFBP 7177 / CIP 109463 / NCPPB 4357 / Et1/99).